Consider the following 215-residue polypeptide: Deoxyadenosine kinase (215 aa).

9–17 (GPIGAGKSS) is an ATP binding site. Substrate is bound by residues E33, Y45, and N56. The active-site Proton acceptor is the D79. Residues R80, D85, and E150 each contribute to the substrate site.

This sequence belongs to the DCK/DGK family. In terms of assembly, heterodimer of a deoxyadenosine (DAK) and a deoxyguanosine kinase (DGK).

It carries out the reaction 2'-deoxyadenosine + ATP = dAMP + ADP + H(+). Its function is as follows. DGK/DAK plays an essential role in generating the deoxyribonucleotide precursors, dGTP and dATP, for DNA metabolism. This Lactobacillus acidophilus (strain ATCC 700396 / NCK56 / N2 / NCFM) protein is Deoxyadenosine kinase.